The chain runs to 160 residues: Ribosome maturation factor RimP (160 aa).

It belongs to the RimP family.

The protein localises to the cytoplasm. Required for maturation of 30S ribosomal subunits. In Cronobacter sakazakii (strain ATCC BAA-894) (Enterobacter sakazakii), this protein is Ribosome maturation factor RimP.